The primary structure comprises 248 residues: Geranylgeranylglyceryl phosphate synthase (248 aa).

Mg(2+) contacts are provided by Asp25 and Ser50. Residues 170–176, 201–202, and 223–224 each bind sn-glycerol 1-phosphate; these read YLEAGSG, GG, and GT.

This sequence belongs to the GGGP/HepGP synthase family. Group II subfamily. Mg(2+) serves as cofactor.

Its subcellular location is the cytoplasm. It carries out the reaction sn-glycerol 1-phosphate + (2E,6E,10E)-geranylgeranyl diphosphate = sn-3-O-(geranylgeranyl)glycerol 1-phosphate + diphosphate. It functions in the pathway membrane lipid metabolism; glycerophospholipid metabolism. In terms of biological role, prenyltransferase that catalyzes the transfer of the geranylgeranyl moiety of geranylgeranyl diphosphate (GGPP) to the C3 hydroxyl of sn-glycerol-1-phosphate (G1P). This reaction is the first ether-bond-formation step in the biosynthesis of archaeal membrane lipids. This chain is Geranylgeranylglyceryl phosphate synthase, found in Methanococcus aeolicus (strain ATCC BAA-1280 / DSM 17508 / OCM 812 / Nankai-3).